A 30-amino-acid polypeptide reads, in one-letter code: Bacteriocin curvaticin (30 aa).

A disulfide bond links Cys-9 and Cys-14.

It is found in the secreted. Has antibacterial activity against the Gram-positive bacterium L.monocytogenes. This chain is Bacteriocin curvaticin, found in Latilactobacillus curvatus (Lactobacillus curvatus).